We begin with the raw amino-acid sequence, 160 residues long: CST complex subunit STN1 (160 aa).

The OB DNA-binding region spans 41-133 (VEIVGTIVSR…QITANVAVAE (93 aa)).

It belongs to the STN1 family. Component of the CST complex, composed of CTC1, TEN1 and STN1. Interacts with CTC1. Interacts with TEN1. Interacts with POT1A. In vitro interaction with TEN1 and POT1A is mutually exclusive, indicating that POT1A and TEN1 may compete for the same binding site. As to expression, widely expressed.

The protein resides in the nucleus. Its subcellular location is the chromosome. The protein localises to the telomere. Its function is as follows. Component of the CST complex, a complex that binds to single-stranded DNA and is required to protect telomeres from DNA degradation. The CST complex binds single-stranded DNA with high affinity in a sequence-independent manner, while isolated subunits bind DNA with low affinity by themselves. Associates with enzymatically active telomerase. Plays a genomewide role in DNA replication and facilitates re-replication at non-telomeric loci. The sequence is that of CST complex subunit STN1 from Arabidopsis thaliana (Mouse-ear cress).